Here is a 76-residue protein sequence, read N- to C-terminus: Tautomerase PptA (76 aa).

Proline 2 acts as the Proton acceptor; via imino nitrogen in catalysis.

It belongs to the 4-oxalocrotonate tautomerase family. PptA subfamily. As to quaternary structure, homodimer.

It is found in the cytoplasm. The sequence is that of Tautomerase PptA from Pectobacterium atrosepticum (strain SCRI 1043 / ATCC BAA-672) (Erwinia carotovora subsp. atroseptica).